The following is a 702-amino-acid chain: Polyphosphate kinase (702 aa).

Asn55 provides a ligand contact to ATP. Residues Arg389 and Arg419 each contribute to the Mg(2+) site. The Phosphohistidine intermediate role is filled by His449. ATP contacts are provided by Tyr482, Arg578, and His606.

This sequence belongs to the polyphosphate kinase 1 (PPK1) family. It depends on Mg(2+) as a cofactor. Post-translationally, an intermediate of this reaction is the autophosphorylated ppk in which a phosphate is covalently linked to a histidine residue through a N-P bond.

It carries out the reaction [phosphate](n) + ATP = [phosphate](n+1) + ADP. Its function is as follows. Catalyzes the reversible transfer of the terminal phosphate of ATP to form a long-chain polyphosphate (polyP). This is Polyphosphate kinase from Bacillus cereus (strain ATCC 14579 / DSM 31 / CCUG 7414 / JCM 2152 / NBRC 15305 / NCIMB 9373 / NCTC 2599 / NRRL B-3711).